A 485-amino-acid chain; its full sequence is Keratin, type I cytoskeletal 14 (485 aa).

The span at 1-15 (MATCSRQFTSSSSMK) shows a compositional bias: polar residues. A disordered region spans residues 1-21 (MATCSRQFTSSSSMKGSCGIG). Residues 1 to 121 (MATCSRQFTS…GLGDGLLVGS (121 aa)) are head. Positions 122 to 157 (EKVTMQNLNDRLATYLDKVRALEEANSDLEVKIRDW) are coil 1A. Residues 122–433 (EKVTMQNLND…RLLEGEDAHL (312 aa)) form the IF rod domain. Positions 158 to 175 (YQRQRPTEIKDYSPYFKT) are linker 1. Positions 176–267 (IEDLKSKILA…KNHEEEMASM (92 aa)) are coil 1B. Residues 268 to 290 (RGQVGGDVNVEMDAAPGVDLSRI) form a linker 12 region. A coil 2 region spans residues 291-429 (LNEMRDQYEK…ATYRRLLEGE (139 aa)). The segment at 430–485 (DAHLSSAQFSSSSQFSSGSQSSRDVTSTNRQIRTKVMDVHDGKVVSTHEQVLRTKN) is tail. The interval 432–485 (HLSSAQFSSSSQFSSGSQSSRDVTSTNRQIRTKVMDVHDGKVVSTHEQVLRTKN) is interaction with Type I keratins and keratin filaments. Positions 437-451 (QFSSSSQFSSGSQSS) are enriched in low complexity. A disordered region spans residues 437–458 (QFSSSSQFSSGSQSSRDVTSTN). Serine 448 is modified (phosphoserine).

This sequence belongs to the intermediate filament family. In terms of assembly, heterotetramer of two type I and two type II keratins. Forms a disulfide-linked heterodimer (via 2B domains) with KRT5 (via 2B domains). Forms a heterodimer with KRT1; the interaction is more abundant in the absence of KRT5. Interacts with TRADD and with keratin filaments. Associates with other type I keratins. Interacts with EPPK1. Interacts with KLHL24. Interacts with PKP1 (via N-terminus) and PKP2. In terms of processing, a disulfide bond is formed between rather than within filaments and promotes the formation of a keratin filament cage around the nucleus. Post-translationally, ubiquitinated by the BCR(KLHL24) E3 ubiquitin ligase complex. As to expression, expressed in most cells of squamous cell carcinomas, in spinous and suprabasal cells around the branching papillary region of papillomas, and weakly in a few proliferative cells of hyperplastic tissue.

Its subcellular location is the cytoplasm. It localises to the nucleus. Functionally, the nonhelical tail domain is involved in promoting KRT5-KRT14 filaments to self-organize into large bundles and enhances the mechanical properties involved in resilience of keratin intermediate filaments in vitro. The chain is Keratin, type I cytoskeletal 14 (Krt14) from Rattus norvegicus (Rat).